The following is a 404-amino-acid chain: MTHDLAASGLRFGIEEEFFLLDASDLDIVRSAPAGFVAACRDTLGEHFAEEMFECQVEVASPVFSTLAEAARFHGQARQRLAHLAMDFGLRSLCVGTHPFADWRRARSNPAAHFARLFEDQGRVARRSLVCGLHVHVEIPPSHDRMAVLQRVLPWLPLLLALSASSPFRGGRRSGLASYRRALCGEWPRMNIPPALPDEDAYRRHLALLREAGCIREDGQVWWMIRPSSHVPTLELRICDACPRLADALSLAGLFRALVGEALGAGPRTLPVARDACLEENYWQALRYGCAGRYLVGGRAVGAGDWLEMAWRQCRPQARQGNEWAYEHARGLLGETSASRQLRRYQTLRAAGQERHVALRRLVEELLEENLQPALAGPAGKRAHEGGRSFRPAAGAPMSIRGQE.

Residues 377–404 (GPAGKRAHEGGRSFRPAAGAPMSIRGQE) are disordered.

The protein belongs to the glutamate--cysteine ligase type 2 family. YbdK subfamily.

The enzyme catalyses L-cysteine + L-glutamate + ATP = gamma-L-glutamyl-L-cysteine + ADP + phosphate + H(+). Its function is as follows. ATP-dependent carboxylate-amine ligase which exhibits weak glutamate--cysteine ligase activity. In Pseudomonas aeruginosa (strain UCBPP-PA14), this protein is Putative glutamate--cysteine ligase 2.